An 818-amino-acid chain; its full sequence is Protein Cep78 homolog (818 aa).

Disordered stretches follow at residues 513-589 (LDVE…HEFA), 691-748 (RQAN…TEAT), and 768-798 (KQSE…DQNV). Residues 514 to 539 (DVEEEEEEEEEEQQAEESQSESEPQN) are compositionally biased toward acidic residues. Positions 561–589 (VRSEIKYVENNPKEAAKKNRESKSDHEFA) are enriched in basic and acidic residues. Over residues 782–792 (GDAGGGGGSGD) the composition is skewed to gly residues.

The protein belongs to the CEP78 family.

The protein localises to the cytoplasm. It localises to the cytoskeleton. The protein resides in the microtubule organizing center. It is found in the centrosome. Its subcellular location is the centriole. The protein localises to the cilium basal body. Functionally, may play a role in cilium biogenesis. This is Protein Cep78 homolog from Drosophila melanogaster (Fruit fly).